The chain runs to 270 residues: Allergen Asp f 7 (270 aa).

The N-terminal stretch at 1 to 21 (MAPIFKSLALVSALFAAISSA) is a signal peptide. Disordered stretches follow at residues 53–97 (YPTP…QPTQ) and 113–167 (ADSA…GPCS). Low complexity predominate over residues 63 to 81 (VVESTPTPTPSAAPEQAEP). The span at 83–97 (ETSTQPETTKSQPTQ) shows a compositional bias: polar residues. Residues 127-149 (PATTAAPSTSTTTQAAPSAPPAA) show a composition bias toward low complexity. A compositionally biased stretch (polar residues) spans 150 to 162 (NSGSTEKAASSGY).

This chain is Allergen Asp f 7, found in Aspergillus fumigatus (strain ATCC MYA-4609 / CBS 101355 / FGSC A1100 / Af293) (Neosartorya fumigata).